The sequence spans 470 residues: Pre-mycofactocin glycosyltransferase (470 aa).

A helical membrane pass occupies residues 315–335; the sequence is LVISGGALMAWILMSIGTGLG.

This sequence belongs to the glycosyltransferase 2 family.

The protein resides in the cell membrane. Involved in the biosynthesis of the enzyme cofactor mycofactocin (MFT). Acts as a glycosyltransferase that catalyzes the oligoglycosylation of pre-mycofactocin (PMFT), adding up to nine beta-1,4-linked glucose residues. Is required for the in vivo ethanol assimilation in M.smegmatis. This Mycobacterium tuberculosis (strain CDC 1551 / Oshkosh) protein is Pre-mycofactocin glycosyltransferase (mftF).